Here is a 110-residue protein sequence, read N- to C-terminus: Evasin P1166 (110 aa).

The signal sequence occupies residues 1–24 (MEVKIFTLLQIALFIALGIHLVVA). 3 disulfides stabilise this stretch: cysteine 45–cysteine 67, cysteine 49–cysteine 69, and cysteine 60–cysteine 80. A glycan (N-linked (GlcNAc...) asparagine) is linked at asparagine 48. The interval 89-110 (SEYPNPKSSEIDAAAPLPRETH) is disordered.

The protein localises to the secreted. Salivary chemokine-binding protein which binds to host chemokines CXCL1, CXCL2 and CXCL8. The polypeptide is Evasin P1166 (Ixodes ricinus (Common tick)).